The sequence spans 187 residues: Ribosome maturation factor RimM (187 aa).

Positions 94–168 constitute a PRC barrel domain; that stretch reads DDEFYHADLV…RVIVDMPDGL (75 aa). Residues 167–187 are disordered; sequence GLIGGDKPDTSDTAPLGQDFD.

This sequence belongs to the RimM family. In terms of assembly, binds ribosomal protein uS19.

It is found in the cytoplasm. In terms of biological role, an accessory protein needed during the final step in the assembly of 30S ribosomal subunit, possibly for assembly of the head region. Essential for efficient processing of 16S rRNA. May be needed both before and after RbfA during the maturation of 16S rRNA. It has affinity for free ribosomal 30S subunits but not for 70S ribosomes. The polypeptide is Ribosome maturation factor RimM (Jannaschia sp. (strain CCS1)).